A 258-amino-acid chain; its full sequence is PF03932 family protein CutC (258 aa).

This sequence belongs to the CutC family.

Its subcellular location is the cytoplasm. In Mesorhizobium japonicum (strain LMG 29417 / CECT 9101 / MAFF 303099) (Mesorhizobium loti (strain MAFF 303099)), this protein is PF03932 family protein CutC.